Reading from the N-terminus, the 401-residue chain is Argininosuccinate synthase (401 aa).

8–16 (AYSGGLDTS) contacts ATP. Residue Y85 coordinates L-citrulline. Residue G115 coordinates ATP. L-aspartate contacts are provided by T117, N121, and D122. N121 provides a ligand contact to L-citrulline. Residues R125, S173, E258, and Y270 each coordinate L-citrulline.

This sequence belongs to the argininosuccinate synthase family. Type 1 subfamily. As to quaternary structure, homotetramer.

The protein localises to the cytoplasm. It catalyses the reaction L-citrulline + L-aspartate + ATP = 2-(N(omega)-L-arginino)succinate + AMP + diphosphate + H(+). It participates in amino-acid biosynthesis; L-arginine biosynthesis; L-arginine from L-ornithine and carbamoyl phosphate: step 2/3. This chain is Argininosuccinate synthase, found in Staphylococcus carnosus (strain TM300).